Consider the following 207-residue polypeptide: Large ribosomal subunit protein uL4 (207 aa).

The interval 55 to 76 is disordered; the sequence is ALVSGGGKKPWRQKGTGRARHG. A compositionally biased stretch (basic residues) spans 63–76; that stretch reads KPWRQKGTGRARHG.

The protein belongs to the universal ribosomal protein uL4 family. Part of the 50S ribosomal subunit.

One of the primary rRNA binding proteins, this protein initially binds near the 5'-end of the 23S rRNA. It is important during the early stages of 50S assembly. It makes multiple contacts with different domains of the 23S rRNA in the assembled 50S subunit and ribosome. Functionally, forms part of the polypeptide exit tunnel. In Phytoplasma mali (strain AT), this protein is Large ribosomal subunit protein uL4.